The sequence spans 215 residues: Large ribosomal subunit protein eL14 (215 aa).

Lys-79 is subject to N6-acetyllysine. Lys-85 carries the post-translational modification N6-acetyllysine; alternate. The residue at position 85 (Lys-85) is an N6-succinyllysine; alternate. Lys-124 is covalently cross-linked (Glycyl lysine isopeptide (Lys-Gly) (interchain with G-Cter in SUMO2)). Ser-139 is modified (phosphoserine). Residues 161-215 (VPAKKITAASKKAPAQKVPAQKATGQKAAPAPKAQKGQKAPAQKAPAPKASGKKA) are disordered. A run of 6 repeats spans residues 171–175 (KKAPA), 176–180 (QKVPA), 181–185 (QKATG), 186–190 (QKAAP), 193–195 (KAQ), and 196–198 (KGQ). Positions 171 to 190 (KKAPAQKVPAQKATGQKAAP) are 4 X 5 AA tandem repeats of Q-K-A-[PAS]-X. Residues 193 to 198 (KAQKGQ) are 2 X 3 AA tandem repeats of K-[GA]-Q. At Lys-204 the chain carries N6-succinyllysine.

This sequence belongs to the eukaryotic ribosomal protein eL14 family. Component of the large ribosomal subunit.

The protein resides in the cytoplasm. Functionally, component of the large ribosomal subunit. The ribosome is a large ribonucleoprotein complex responsible for the synthesis of proteins in the cell. This is Large ribosomal subunit protein eL14 (RPL14) from Homo sapiens (Human).